Consider the following 489-residue polypeptide: GTPase Der (489 aa).

2 consecutive EngA-type G domains span residues 3-166 (PVVA…AEAM) and 200-373 (IKLA…ESAT). GTP contacts are provided by residues 9–16 (GRPNVGKS), 56–60 (DTGGI), 118–121 (NKVD), 206–213 (GKPNVGKS), 253–257 (DTAGV), and 318–321 (NKWD). A KH-like domain is found at 374–458 (RRVSTSMLTR…PIQVRFQEGG (85 aa)).

The protein belongs to the TRAFAC class TrmE-Era-EngA-EngB-Septin-like GTPase superfamily. EngA (Der) GTPase family. Associates with the 50S ribosomal subunit.

Its function is as follows. GTPase that plays an essential role in the late steps of ribosome biogenesis. This chain is GTPase Der, found in Shewanella loihica (strain ATCC BAA-1088 / PV-4).